The following is a 1637-amino-acid chain: Probable serine/threonine-protein kinase gdt2 (1637 aa).

The first 19 residues, M1 to T19, serve as a signal peptide directing secretion. The Extracellular segment spans residues F20–P896. The chain crosses the membrane as a helical span at residues I897 to G917. At A918 to N1637 the chain is on the cytoplasmic side. Residues S977–P990 show a composition bias toward polar residues. The tract at residues S977–T1000 is disordered. The span at T991–T1000 shows a compositional bias: low complexity. Residues I1290–K1547 form the Protein kinase domain. ATP-binding positions include I1296–V1304 and K1317. Catalysis depends on D1408, which acts as the Proton acceptor. The disordered stretch occupies residues D1557–N1637. 2 stretches are compositionally biased toward low complexity: residues N1568–N1589 and N1597–N1637.

This sequence in the N-terminal section; belongs to the GDT family. In the C-terminal section; belongs to the protein kinase superfamily. TKL Ser/Thr protein kinase family.

The protein localises to the membrane. It catalyses the reaction L-seryl-[protein] + ATP = O-phospho-L-seryl-[protein] + ADP + H(+). The catalysed reaction is L-threonyl-[protein] + ATP = O-phospho-L-threonyl-[protein] + ADP + H(+). In terms of biological role, regulates the transition between growth and differentiation. This chain is Probable serine/threonine-protein kinase gdt2 (gdt2), found in Dictyostelium discoideum (Social amoeba).